Reading from the N-terminus, the 110-residue chain is Nucleoid-associated protein YE3092 (110 aa).

Belongs to the YbaB/EbfC family. Homodimer.

It is found in the cytoplasm. The protein localises to the nucleoid. Binds to DNA and alters its conformation. May be involved in regulation of gene expression, nucleoid organization and DNA protection. The polypeptide is Nucleoid-associated protein YE3092 (Yersinia enterocolitica serotype O:8 / biotype 1B (strain NCTC 13174 / 8081)).